We begin with the raw amino-acid sequence, 453 residues long: ACT domain-containing protein ACR3 (453 aa).

ACT domains lie at 37–112 (LVKV…SASQ), 130–212 (SIEI…KFAR), 266–341 (VINV…RVSE), and 344–423 (SLEL…VPSR).

Expressed in roots, cotyledons, rosette and cauline leaves, sepals, style, and pedicels and tips of young developing siliques.

Its function is as follows. May bind amino acids. This is ACT domain-containing protein ACR3 from Arabidopsis thaliana (Mouse-ear cress).